The primary structure comprises 452 residues: Deoxybrevianamide E synthase notF (452 aa).

The span at 1 to 19 (MTAPELRVDTFRAPEDAPK) shows a compositional bias: basic and acidic residues. Residues 1–38 (MTAPELRVDTFRAPEDAPKEPSAQQPRLPSSPSPAQAL) are disordered. The span at 21 to 38 (PSAQQPRLPSSPSPAQAL) shows a compositional bias: low complexity. Glutamate 108 provides a ligand contact to brevianamide F. The dimethylallyl diphosphate site is built by arginine 122, lysine 212, tyrosine 214, lysine 282, tyrosine 284, tyrosine 371, tyrosine 436, and tyrosine 440.

It belongs to the tryptophan dimethylallyltransferase family. As to quaternary structure, monomer.

The catalysed reaction is brevianamide F + dimethylallyl diphosphate = deoxybrevianamide E + diphosphate. Its pathway is alkaloid biosynthesis. Addition of 5 mM Mg(2+), Ca(2+) or Mn(2+) slightly enhances catalysis (about 100-120%). Significant reduction of enzyme activity (2%-35%) is observed with Cu(2+), Zn(2+), Fe(2+), or Sn(2+) (5 mM). Its function is as follows. Deoxybrevianamide E synthase; part of the gene cluster that mediates the biosynthesis of notoamide, a fungal indole alkaloid that belongs to a family of natural products containing a characteristic bicyclo[2.2.2]diazaoctane core. The first step of notoamide biosynthesis involves coupling of L-proline and L-tryptophan by the bimodular NRPS notE, to produce cyclo-L-tryptophan-L-proline called brevianamide F. The reverse prenyltransferase notF then acts as a deoxybrevianamide E synthase and converts brevianamide F to deoxybrevianamide E via reverse prenylation at C-2 of the indole ring leading to the bicyclo[2.2.2]diazaoctane core. Deoxybrevianamide E is further hydroxylated at C-6 of the indole ring, likely catalyzed by the cytochrome P450 monooxygenase notG, to yield 6-hydroxy-deoxybrevianamide E. 6-hydroxy-deoxybrevianamide E is a specific substrate of the prenyltransferase notC for normal prenylation at C-7 to produce 6-hydroxy-7-prenyl-deoxybrevianamide, also called notoamide S. As the proposed pivotal branching point in notoamide biosynthesis, notoamide S can be diverted to notoamide E through an oxidative pyran ring closure putatively catalyzed by either notH cytochrome P450 monooxygenase or the notD FAD-linked oxidoreductase. This step would be followed by an indole 2,3-epoxidation-initiated pinacol-like rearrangement catalyzed by the notB FAD-dependent monooxygenase leading to the formation of notoamide C and notoamide D. On the other hand notoamide S is converted to notoamide T by notH (or notD), a bifunctional oxidase that also functions as the intramolecular Diels-Alderase responsible for generation of (+)-notoamide T. To generate antipodal (-)-notoaminide T, notH' (or notD') in Aspergillus versicolor is expected to catalyze a Diels-Alder reaction leading to the opposite stereochemistry. The remaining oxidoreductase notD (or notH) likely catalyzes the oxidative pyran ring formation to yield (+)-stephacidin A. The FAD-dependent monooxygenase notI is highly similar to notB and is predicted to catalyze a similar conversion from (+)-stephacidin A to (-)-notoamide B via the 2,3-epoxidation of (+)-stephacidin A followed by a pinacol-type rearrangement. Finally, it remains unclear which enzyme could be responsible for the final hydroxylation steps leading to notoamide A and sclerotiamide. This is Deoxybrevianamide E synthase notF from Aspergillus sp. (strain MF297-2).